Reading from the N-terminus, the 1058-residue chain is Carbamoyl phosphate synthase large chain (1058 aa).

Positions 1–401 are carboxyphosphate synthetic domain; it reads MPKRTDIQKI…SLLKACRSLE (401 aa). ATP contacts are provided by arginine 129, arginine 169, glycine 175, glycine 176, arginine 208, isoleucine 210, glutamate 215, glycine 241, isoleucine 242, histidine 243, glutamine 284, and glutamate 298. The 195-residue stretch at 133–327 folds into the ATP-grasp 1 domain; sequence KQLMEELEQP…IAKLAAKIAV (195 aa). Glutamine 284, glutamate 298, and asparagine 300 together coordinate Mg(2+). Mn(2+) is bound by residues glutamine 284, glutamate 298, and asparagine 300. The segment at 402-546 is oligomerization domain; sequence IGVHHNEIPE…YSTYGWENES (145 aa). Residues 547 to 929 are carbamoyl phosphate synthetic domain; sequence IRSDKESVLV…ALYKAFEASY (383 aa). An ATP-grasp 2 domain is found at 671–861; sequence EQALKELDIP…MAQVATKLIL (191 aa). Positions 707, 746, 748, 752, 777, 778, 779, 780, 820, and 832 each coordinate ATP. Residues glutamine 820, glutamate 832, and asparagine 834 each contribute to the Mg(2+) site. 3 residues coordinate Mn(2+): glutamine 820, glutamate 832, and asparagine 834. The MGS-like domain maps to 930–1058; that stretch reads LHLPTFGNVV…ESRSFVTEAI (129 aa). An allosteric domain region spans residues 930 to 1058; it reads LHLPTFGNVV…ESRSFVTEAI (129 aa).

This sequence belongs to the CarB family. Composed of two chains; the small (or glutamine) chain promotes the hydrolysis of glutamine to ammonia, which is used by the large (or ammonia) chain to synthesize carbamoyl phosphate. Tetramer of heterodimers (alpha,beta)4. Requires Mg(2+) as cofactor. The cofactor is Mn(2+).

It catalyses the reaction hydrogencarbonate + L-glutamine + 2 ATP + H2O = carbamoyl phosphate + L-glutamate + 2 ADP + phosphate + 2 H(+). The enzyme catalyses hydrogencarbonate + NH4(+) + 2 ATP = carbamoyl phosphate + 2 ADP + phosphate + 2 H(+). It participates in amino-acid biosynthesis; L-arginine biosynthesis; carbamoyl phosphate from bicarbonate: step 1/1. Its pathway is pyrimidine metabolism; UMP biosynthesis via de novo pathway; (S)-dihydroorotate from bicarbonate: step 1/3. Large subunit of the glutamine-dependent carbamoyl phosphate synthetase (CPSase). CPSase catalyzes the formation of carbamoyl phosphate from the ammonia moiety of glutamine, carbonate, and phosphate donated by ATP, constituting the first step of 2 biosynthetic pathways, one leading to arginine and/or urea and the other to pyrimidine nucleotides. The large subunit (synthetase) binds the substrates ammonia (free or transferred from glutamine from the small subunit), hydrogencarbonate and ATP and carries out an ATP-coupled ligase reaction, activating hydrogencarbonate by forming carboxy phosphate which reacts with ammonia to form carbamoyl phosphate. The protein is Carbamoyl phosphate synthase large chain of Streptococcus pneumoniae (strain 70585).